We begin with the raw amino-acid sequence, 370 residues long: S-adenosylmethionine:tRNA ribosyltransferase-isomerase (370 aa).

Belongs to the QueA family. In terms of assembly, monomer.

It is found in the cytoplasm. The catalysed reaction is 7-aminomethyl-7-carbaguanosine(34) in tRNA + S-adenosyl-L-methionine = epoxyqueuosine(34) in tRNA + adenine + L-methionine + 2 H(+). Its pathway is tRNA modification; tRNA-queuosine biosynthesis. Functionally, transfers and isomerizes the ribose moiety from AdoMet to the 7-aminomethyl group of 7-deazaguanine (preQ1-tRNA) to give epoxyqueuosine (oQ-tRNA). The polypeptide is S-adenosylmethionine:tRNA ribosyltransferase-isomerase (Synechococcus sp. (strain WH7803)).